The chain runs to 122 residues: Small ribosomal subunit protein uS13 (122 aa).

The tract at residues 99–122 (RGQRTHTNARTRKGPAKAIAGKKK) is disordered.

The protein belongs to the universal ribosomal protein uS13 family. As to quaternary structure, part of the 30S ribosomal subunit. Forms a loose heterodimer with protein S19. Forms two bridges to the 50S subunit in the 70S ribosome.

Located at the top of the head of the 30S subunit, it contacts several helices of the 16S rRNA. In the 70S ribosome it contacts the 23S rRNA (bridge B1a) and protein L5 of the 50S subunit (bridge B1b), connecting the 2 subunits; these bridges are implicated in subunit movement. Contacts the tRNAs in the A and P-sites. The sequence is that of Small ribosomal subunit protein uS13 from Rhodopseudomonas palustris (strain HaA2).